The sequence spans 375 residues: Esterase AN6793 (375 aa).

Positions 138 to 158 (RHPQPGLDPGHGHRHKRMPPL) are disordered.

It belongs to the sidJ hydrolase family. Homodimer.

It participates in secondary metabolite biosynthesis. In terms of biological role, esterase; part of a cluster that mediates the biosynthesis of a yet undetermined secondary metabolite. With the HR-PKS AN6791, produces a pathway intermediate compound with molecular weight 258. The chain is Esterase AN6793 from Emericella nidulans (strain FGSC A4 / ATCC 38163 / CBS 112.46 / NRRL 194 / M139) (Aspergillus nidulans).